A 221-amino-acid chain; its full sequence is UPF0319 protein NTHI1987 (221 aa).

The N-terminal stretch at 1 to 21 is a signal peptide; sequence MKLRAVVLGLATLCTSTATFA.

This sequence belongs to the UPF0319 family.

The polypeptide is UPF0319 protein NTHI1987 (Haemophilus influenzae (strain 86-028NP)).